The primary structure comprises 854 residues: Protein mono-ADP-ribosyltransferase PARP8 (854 aa).

2 disordered regions span residues 113–138 (NGEE…EFYY) and 291–310 (SYPP…EQDG). The segment covering 123 to 135 (VEEDSEGDNDSEE) has biased composition (acidic residues). ADP-ribosylcysteine occurs at positions 332, 367, 376, and 395. The PARP catalytic domain occupies 617–844 (EMTQAPYLEI…QEGGIHKEIL (228 aa)). Positions 750-777 (QKVSAKDEPASSSKSSNTSQSQKKGQQS) are disordered. Low complexity predominate over residues 760–777 (SSSKSSNTSQSQKKGQQS).

The protein belongs to the ARTD/PARP family. In terms of processing, auto-mono-ADP-ribosylated.

It carries out the reaction L-cysteinyl-[protein] + NAD(+) = S-(ADP-D-ribosyl)-L-cysteinyl-[protein] + nicotinamide + H(+). Functionally, mono-ADP-ribosyltransferase that mediates mono-ADP-ribosylation of target proteins. In Homo sapiens (Human), this protein is Protein mono-ADP-ribosyltransferase PARP8.